The chain runs to 965 residues: SKI family transcriptional corepressor 1 (965 aa).

Disordered regions lie at residues 45-72 (TQLG…SSAL), 278-367 (RTFS…GGGA), 410-458 (DDPV…GGGA), 530-592 (SGAP…GSYV), 615-777 (AYGA…FAPE), and 796-843 (VCTP…EDGL). Composition is skewed to gly residues over residues 283-312 (QGGG…GPGC), 356-367 (GPAGPGGPGGGA), and 418-442 (EPKG…GGPG). Over residues 571-586 (LPPPLAPLPPPPPPPA) the composition is skewed to pro residues. The segment covering 620–632 (PARGPGPGAGSGG) has biased composition (gly residues). Residues 641-650 (EGSSSYNSAS) show a composition bias toward polar residues. Composition is skewed to acidic residues over residues 654 to 663 (DTADEPEVDV) and 670 to 679 (DDEDAQEETE). The segment covering 800 to 823 (EAHEPDKEDNHSPADDLETRKSYP) has biased composition (basic and acidic residues). Residues 824–835 (DQRSISQPSPAN) are compositionally biased toward polar residues. A coiled-coil region spans residues 858–922 (ENLAREELQK…DTLCNELDQE (65 aa)).

Belongs to the SKI family. Interacts with LBX1. Interacts with SMAD1, SMAD2 and SMAD3. As to expression, present specifically in cerebellar Purkinje cells (at protein level).

Its subcellular location is the nucleus. Its function is as follows. Acts as a transcriptional corepressor of LBX1. Inhibits BMP signaling. The chain is SKI family transcriptional corepressor 1 (SKOR1) from Homo sapiens (Human).